The following is a 289-amino-acid chain: MACPPELEESLVWKLTDLGLHRHAVQHAPETPDRKQLLLWLPQPEWPEAERQQLLASLEPLAEPFGLPLPQGHWDDVADEDWSLSWKQHWQPDPVGEGLLILPAWLEVPPEHGERLVIRMDPGSAFGTGSHPTTRLCLEALEKAPPVGALVADLGCGSGVLGLAALGLGATAVVAADTDSLAVRATGDNRELNGRPADLLKVSLGSVEALQHLLEGRRADLLLCNILAPVIEALAPGFEALVAPEGRALLSGLLVDQAPRLEQVLGDLGWRVSARGSQGRWGLLEIQRR.

S-adenosyl-L-methionine is bound by residues threonine 134, glycine 155, aspartate 177, and asparagine 225.

This sequence belongs to the methyltransferase superfamily. PrmA family.

It localises to the cytoplasm. The catalysed reaction is L-lysyl-[protein] + 3 S-adenosyl-L-methionine = N(6),N(6),N(6)-trimethyl-L-lysyl-[protein] + 3 S-adenosyl-L-homocysteine + 3 H(+). Methylates ribosomal protein L11. The sequence is that of Ribosomal protein L11 methyltransferase from Parasynechococcus marenigrum (strain WH8102).